We begin with the raw amino-acid sequence, 305 residues long: UDP-N-acetylenolpyruvoylglucosamine reductase (305 aa).

The region spanning 37–202 (GIGGPARFLA…LSVTFNLEPK (166 aa)) is the FAD-binding PCMH-type domain. Arg-183 is a catalytic residue.

The protein belongs to the MurB family. FAD is required as a cofactor.

The protein localises to the cytoplasm. It catalyses the reaction UDP-N-acetyl-alpha-D-muramate + NADP(+) = UDP-N-acetyl-3-O-(1-carboxyvinyl)-alpha-D-glucosamine + NADPH + H(+). Its pathway is cell wall biogenesis; peptidoglycan biosynthesis. Functionally, cell wall formation. The polypeptide is UDP-N-acetylenolpyruvoylglucosamine reductase (Rhodopirellula baltica (strain DSM 10527 / NCIMB 13988 / SH1)).